The sequence spans 125 residues: Small ribosomal subunit protein bS6 (125 aa).

The segment at 99-125 (ASPMVKAREERKPLTEVENNDFEDAEE) is disordered. Positions 104-113 (KAREERKPLT) are enriched in basic and acidic residues. The span at 116-125 (ENNDFEDAEE) shows a compositional bias: acidic residues.

It belongs to the bacterial ribosomal protein bS6 family.

In terms of biological role, binds together with bS18 to 16S ribosomal RNA. This is Small ribosomal subunit protein bS6 from Histophilus somni (strain 2336) (Haemophilus somnus).